The sequence spans 401 residues: Phosphoglycerate kinase, cytosolic (401 aa).

(2R)-3-phosphoglycerate-binding residues include alanine 24, aspartate 25, asparagine 27, arginine 41, serine 63, histidine 64, glycine 66, arginine 67, arginine 122, histidine 154, and arginine 155. ADP is bound at residue glycine 200. Glycine 200 serves as a coordination point for CDP. Residues lysine 202 and lysine 206 each coordinate AMP. Lysine 206 lines the ATP pocket. Position 224 (glycine 224) interacts with ADP. Glycine 224 lines the CDP pocket. Positions 225 and 297 each coordinate AMP. The ATP site is built by glycine 225 and glycine 297. CDP-binding residues include glycine 322 and phenylalanine 327. Residue phenylalanine 327 participates in ADP binding. Glutamate 328 is a binding site for AMP. The ATP site is built by glutamate 328, aspartate 359, and serine 360. Aspartate 359 is a binding site for Mg(2+).

This sequence belongs to the phosphoglycerate kinase family. Monomer. Mg(2+) serves as cofactor.

It localises to the cytoplasm. The catalysed reaction is (2R)-3-phosphoglycerate + ATP = (2R)-3-phospho-glyceroyl phosphate + ADP. It functions in the pathway carbohydrate degradation; glycolysis; pyruvate from D-glyceraldehyde 3-phosphate: step 2/5. The polypeptide is Phosphoglycerate kinase, cytosolic (Triticum aestivum (Wheat)).